A 705-amino-acid chain; its full sequence is Polyribonucleotide nucleotidyltransferase (705 aa).

Mg(2+) contacts are provided by D485 and D491. Residues 552 to 611 (PRVYTMTIAPEKIRDVIGAGGKTINKIIGETGVQIDIKEDGKIYVMSSDSVGANRALKMI) form the KH domain. An S1 motif domain is found at 621–689 (GEIYLGKVTR…DQGRINLSRR (69 aa)).

This sequence belongs to the polyribonucleotide nucleotidyltransferase family. Mg(2+) serves as cofactor.

The protein resides in the cytoplasm. The catalysed reaction is RNA(n+1) + phosphate = RNA(n) + a ribonucleoside 5'-diphosphate. Its function is as follows. Involved in mRNA degradation. Catalyzes the phosphorolysis of single-stranded polyribonucleotides processively in the 3'- to 5'-direction. This is Polyribonucleotide nucleotidyltransferase from Clostridium tetani (strain Massachusetts / E88).